The following is a 274-amino-acid chain: Nitrogenase iron protein (274 aa).

8–15 (GKGGIGKS) provides a ligand contact to ATP. Cys-94 is a [4Fe-4S] cluster binding site. The residue at position 97 (Arg-97) is an ADP-ribosylarginine; by dinitrogenase reductase ADP-ribosyltransferase. Cys-131 contacts [4Fe-4S] cluster.

Belongs to the NifH/BchL/ChlL family. As to quaternary structure, homodimer. It depends on [4Fe-4S] cluster as a cofactor. In terms of processing, the reversible ADP-ribosylation of Arg-97 inactivates the nitrogenase reductase and regulates nitrogenase activity.

It catalyses the reaction N2 + 8 reduced [2Fe-2S]-[ferredoxin] + 16 ATP + 16 H2O = H2 + 8 oxidized [2Fe-2S]-[ferredoxin] + 2 NH4(+) + 16 ADP + 16 phosphate + 6 H(+). In terms of biological role, the key enzymatic reactions in nitrogen fixation are catalyzed by the nitrogenase complex, which has 2 components: the iron protein and the molybdenum-iron protein. The sequence is that of Nitrogenase iron protein from Chlorobium chlorochromatii (strain CaD3).